Reading from the N-terminus, the 266-residue chain is Probable metal transport system membrane protein TP_0036 (266 aa).

The next 8 helical transmembrane spans lie at 10–30 (AFVA…HLVL), 34–54 (ALMG…AVSC), 56–76 (IHPG…IEFL), 88–108 (LSIV…SGLI), 120–140 (ILVV…FCVG), 172–192 (VASV…GILV), 211–231 (FLLT…LGLV), and 238–258 (VAPG…VIAL).

This sequence belongs to the ABC-3 integral membrane protein family.

The protein localises to the cell inner membrane. In terms of biological role, part of an ATP-driven transport system TP_0034/TP_0035/TP_0036 for a metal. The sequence is that of Probable metal transport system membrane protein TP_0036 from Treponema pallidum (strain Nichols).